Reading from the N-terminus, the 490-residue chain is Phosphoethanolamine N-methyltransferase 3 (490 aa).

S-adenosyl-L-homocysteine-binding residues include G60, R65, D81, D106, V107, and N125. Positions 158, 163, 164, 168, and 175 each coordinate phosphocholine. N-methylethanolamine phosphate is bound by residues 244–245 (QY) and Y253. Y253 is a binding site for phosphocholine. S-adenosyl-L-homocysteine contacts are provided by V262, S263, G289, D311, D337, C338, and R354. Residues Y385, Y399, R403, Y405, and K471 each contribute to the phosphocholine site. N-methylethanolamine phosphate is bound by residues Y385, Y399, 403 to 405 (RGY), and K471.

Belongs to the class I-like SAM-binding methyltransferase superfamily. PEAMT family. In terms of tissue distribution, expressed in root vasculature, shoots, rosettes leaves, cauline leaves, sepals, petals, anther filaments and ovules. Highly expressed in leaf vasculature.

Its subcellular location is the cytoplasm. The catalysed reaction is phosphoethanolamine + S-adenosyl-L-methionine = N-methylethanolamine phosphate + S-adenosyl-L-homocysteine + H(+). It catalyses the reaction N-methylethanolamine phosphate + S-adenosyl-L-methionine = N,N-dimethylethanolamine phosphate + S-adenosyl-L-homocysteine + H(+). The enzyme catalyses N,N-dimethylethanolamine phosphate + S-adenosyl-L-methionine = phosphocholine + S-adenosyl-L-homocysteine + H(+). It functions in the pathway phospholipid metabolism; phosphatidylcholine biosynthesis; phosphocholine from phosphoethanolamine: step 1/1. Involved in phosphocholine biosynthesis. Catalyzes the N-methylation of phosphoethanolamine, phosphomonomethylethanolamine and phosphodimethylethanolamine, the three methylation steps required to convert phosphoethanolamine to phosphocholine (PC). In association with NMT1, regulates PC homeostasis, phase transition at the shoot apex, coordinated organ development, and fertility. In associtation with NMT1, involved in phosphatidylcholine biosynthesis and vascular development. This is Phosphoethanolamine N-methyltransferase 3 from Arabidopsis thaliana (Mouse-ear cress).